The chain runs to 591 residues: Calnexin (591 aa).

The first 20 residues, 1–20 (MEGKWLLCLLLVLGTAAIQA), serve as a signal peptide directing secretion. At 21–482 (HDGHDDDMID…QMLEAAEERP (462 aa)) the chain is on the lumenal side. Ca(2+) contacts are provided by S75 and D118. K138 carries the N6-acetyllysine modification. C161 and C195 form a disulfide bridge. An alpha-D-glucoside is bound by residues Y165, K167, Y186, and D193. Residues 261 to 347 (GNLLNDMTPP…EKPEDWDEDM (87 aa)) form a disordered region. A compositionally biased stretch (basic and acidic residues) spans 275-320 (REIEDPEDRKPEDWDERPKIADPDAVKPDDWDEDAPSKIPDEEATK). The interval 277–410 (IEDPEDRKPE…RKIPNPDFFE (134 aa)) is p domain (Extended arm). 5 consecutive repeat copies span residues 279–291 (DPED…WDER), 296–308 (DPDA…WDED), 315–327 (DEEA…WLDD), 334–346 (DPDA…WDED), and 349–359 (GEWEAPQIANP). 4 X approximate repeats stretches follow at residues 279 to 346 (DPED…WDED) and 349 to 406 (GEWE…IPNP). The segment covering 324–347 (WLDDEPEYIPDPDAEKPEDWDEDM) has biased composition (acidic residues). Residues 327–360 (DEPEYIPDPDAEKPEDWDEDMDGEWEAPQIANPK) form an interaction with PPIB region. Cysteines 361 and 367 form a disulfide. 3 consecutive repeat copies span residues 368–378 (GVWQRPMIDNP), 382–392 (GKWKPPMIDNP), and 396–406 (GIWKPRKIPNP). E426 contributes to the an alpha-D-glucoside binding site. D437 provides a ligand contact to Ca(2+). Residues 483–503 (WLWVVYILTVALPVFLVILFC) form a helical membrane-spanning segment. S-palmitoyl cysteine attachment occurs at residues C503 and C504. The Cytoplasmic segment spans residues 504 to 591 (CSGKKQSNAM…SPRNRKPRRE (88 aa)). The tract at residues 504–591 (CSGKKQSNAM…SPRNRKPRRE (88 aa)) is sufficient to mediate interaction with SGIP1. Over residues 514-538 (EYKKTDAPQPDVKDEEGKEEEKNKG) the composition is skewed to basic and acidic residues. A disordered region spans residues 514–591 (EYKKTDAPQP…SPRNRKPRRE (78 aa)). S553 bears the Phosphoserine mark. Residues 555 to 568 (AEEDGGTGSQDEED) show a composition bias toward acidic residues. Residue T561 is modified to Phosphothreonine. Position 563 is a phosphoserine; by MAPK3 (S563). S582 bears the Phosphoserine mark.

It belongs to the calreticulin family. As to quaternary structure, interacts with MAPK3/ERK1. Interacts with KCNH2. Associates with ribosomes. Interacts with SGIP1; involved in negative regulation of endocytosis. The palmitoylated form interacts with the ribosome-translocon complex component SSR1, promoting efficient folding of glycoproteins. Interacts with SERPINA2P/SERPINA2 and with the S and Z variants of SERPINA1. Interacts with PPIB. Interacts with ZNRF4. Interacts with SMIM22. Interacts with TMX2. Interacts with TMEM35A/NACHO and CHRNA7. Interacts with reticulophagy regulators RETREG2 and RETREG3. Interacts with DNM1L; may form part of a larger protein complex at the ER-mitochondrial interface during mitochondrial fission. Interacts with ADAM7. In terms of processing, phosphorylated at Ser-563 by MAPK3/ERK1. Phosphorylation by MAPK3/ERK1 increases its association with ribosomes. Palmitoylation by DHHC6 leads to the preferential localization to the perinuclear rough ER. It mediates the association of calnexin with the ribosome-translocon complex (RTC) which is required for efficient folding of glycosylated proteins. Post-translationally, ubiquitinated, leading to proteasomal degradation. Probably ubiquitinated by ZNRF4.

Its subcellular location is the endoplasmic reticulum membrane. It is found in the mitochondrion membrane. The protein resides in the melanosome membrane. In terms of biological role, calcium-binding protein that interacts with newly synthesized monoglucosylated glycoproteins in the endoplasmic reticulum. It may act in assisting protein assembly and/or in the retention within the ER of unassembled protein subunits. It seems to play a major role in the quality control apparatus of the ER by the retention of incorrectly folded proteins. Associated with partial T-cell antigen receptor complexes that escape the ER of immature thymocytes, it may function as a signaling complex regulating thymocyte maturation. Additionally it may play a role in receptor-mediated endocytosis at the synapse. This chain is Calnexin (Canx), found in Rattus norvegicus (Rat).